Here is a 439-residue protein sequence, read N- to C-terminus: Putative phosphatidate cytidylyltransferase (439 aa).

The segment at 1–37 is disordered; sequence MARKRTNKRNNSDKENGNVGVVQNKDSASSKTTEPAR. Phosphoserine is present on S12. Over residues 24–33 the composition is skewed to polar residues; that stretch reads NKDSASSKTT. The next 7 membrane-spanning stretches (helical) occupy residues 52-71, 76-98, 110-130, 145-165, 180-199, 245-265, and 321-341; these read FITR…TALA, WVVL…IASV, FINW…SIYA, LVLH…VLFV, FCWT…FMIN, GFLG…YVLM, and FHLA…GFFA.

This sequence belongs to the CDS family. Requires Mg(2+) as cofactor.

The protein resides in the endoplasmic reticulum membrane. The catalysed reaction is a 1,2-diacyl-sn-glycero-3-phosphate + CTP + H(+) = a CDP-1,2-diacyl-sn-glycerol + diphosphate. The protein operates within phospholipid metabolism; CDP-diacylglycerol biosynthesis; CDP-diacylglycerol from sn-glycerol 3-phosphate: step 3/3. Its function is as follows. Supplies CDP-diacylglycerol, which may play an important role as both a precursor to phosphoinositide biosynthesis in the plasma membrane and as a negative effector of phosphatidylinositol 4-kinase activity, thereby exerting an effect on cell proliferation via a lipid-dependent signal transduction cascade. This is Putative phosphatidate cytidylyltransferase from Schizosaccharomyces pombe (strain 972 / ATCC 24843) (Fission yeast).